The following is a 1024-amino-acid chain: Multidrug resistance protein MdtC (1024 aa).

Helical transmembrane passes span 12 to 32, 333 to 353, 360 to 380, 387 to 407, 435 to 455, 469 to 489, 528 to 548, 853 to 873, 875 to 895, 897 to 917, 953 to 973, and 984 to 1004; these read VATT…FSLL, EVER…FIFL, LIPA…MYLC, LSLM…IVVL, VLSM…MAGL, VAIG…CAWL, WVMV…ISIP, LWLI…LYES, VHPL…LLAL, LFDA…IGIV, PIIM…LSSG, and ITIV…TPVI.

It belongs to the resistance-nodulation-cell division (RND) (TC 2.A.6) family. MdtC subfamily. In terms of assembly, part of a tripartite efflux system composed of MdtA, MdtB and MdtC. MdtC forms a heteromultimer with MdtB.

It is found in the cell inner membrane. The sequence is that of Multidrug resistance protein MdtC from Yersinia pseudotuberculosis serotype O:1b (strain IP 31758).